Reading from the N-terminus, the 137-residue chain is Small heat shock protein IbpA (137 aa).

The 110-residue stretch at 28–137 folds into the sHSP domain; it reads SQGNGGYPPY…TLKPRRIEIK (110 aa).

Belongs to the small heat shock protein (HSP20) family. In terms of assembly, monomer. Forms homomultimers of about 100-150 subunits at optimal growth temperatures. Conformation changes to monomers at high temperatures or high ionic concentrations.

It is found in the cytoplasm. Associates with aggregated proteins, together with IbpB, to stabilize and protect them from irreversible denaturation and extensive proteolysis during heat shock and oxidative stress. Aggregated proteins bound to the IbpAB complex are more efficiently refolded and reactivated by the ATP-dependent chaperone systems ClpB and DnaK/DnaJ/GrpE. Its activity is ATP-independent. This is Small heat shock protein IbpA from Serratia proteamaculans (strain 568).